Reading from the N-terminus, the 498-residue chain is Glycerol kinase (498 aa).

ADP is bound at residue T12. Residues T12, T13, and S14 each coordinate ATP. Residue T12 participates in sn-glycerol 3-phosphate binding. R16 serves as a coordination point for ADP. 4 residues coordinate sn-glycerol 3-phosphate: R82, E83, Y134, and D243. Glycerol-binding residues include R82, E83, Y134, D243, and Q244. Residues T265 and G308 each coordinate ADP. The ATP site is built by T265, G308, Q312, and G409. The ADP site is built by G409 and N413.

Belongs to the FGGY kinase family. In terms of assembly, homotetramer and homodimer (in equilibrium).

It carries out the reaction glycerol + ATP = sn-glycerol 3-phosphate + ADP + H(+). It functions in the pathway polyol metabolism; glycerol degradation via glycerol kinase pathway; sn-glycerol 3-phosphate from glycerol: step 1/1. With respect to regulation, activated by phosphorylation and inhibited by fructose 1,6-bisphosphate (FBP). In terms of biological role, key enzyme in the regulation of glycerol uptake and metabolism. Catalyzes the phosphorylation of glycerol to yield sn-glycerol 3-phosphate. This chain is Glycerol kinase, found in Clostridium botulinum (strain Okra / Type B1).